The chain runs to 970 residues: Type III restriction-modification enzyme EcoPI Res subunit (970 aa).

The tract at residues A75 to V540 is helicase-like domain. Residues T894 to K918 are endonuclease domain.

This sequence belongs to the type III restriction-modification system Res protein family. A heterotetramer with stoichiometry Res(2)Mod(2). Requires Mg(2+) as cofactor. The cofactor is S-adenosyl-L-methionine.

The catalysed reaction is Endonucleolytic cleavage of DNA to give specific double-stranded fragments with terminal 5'-phosphates.. Its function is as follows. A type III restriction enzyme that recognizes 2 inversely oriented double-stranded sequences 5'-AGACC-3' and cleaves DNA 25-27 base pairs downstream of one site, producing a single-strand 5' protrusion of two nucleotides. DNA restriction requires both the Res and Mod subunits. DNA topology affects its action; relaxed and negatively supercoiled DNA are digested but positively supercoiled DNA is not a good substrate. After binding to one recognition site undergoes random one-dimensional diffusion along DNA until it collides with a stationary enzyme bound to the second DNA site, which is when DNA cleavage occurs. This is Type III restriction-modification enzyme EcoPI Res subunit from Enterobacteriaceae (Bacteriophage P1).